Here is a 112-residue protein sequence, read N- to C-terminus: Nucleoid-associated protein RER_03900 (112 aa).

This sequence belongs to the YbaB/EbfC family. As to quaternary structure, homodimer.

Its subcellular location is the cytoplasm. It is found in the nucleoid. Functionally, binds to DNA and alters its conformation. May be involved in regulation of gene expression, nucleoid organization and DNA protection. The protein is Nucleoid-associated protein RER_03900 of Rhodococcus erythropolis (strain PR4 / NBRC 100887).